The sequence spans 314 residues: Putative SET domain-containing protein L222 (314 aa).

In terms of domain architecture, SET spans 23–172; sequence EYIQVIYQNP…ANTEITISYG (150 aa).

It belongs to the class V-like SAM-binding methyltransferase superfamily.

This is Putative SET domain-containing protein L222 from Acanthamoeba polyphaga mimivirus (APMV).